Consider the following 1577-residue polypeptide: MAP kinase-activating death domain protein (1577 aa).

The region spanning 13 to 267 (YLVIVGARHP…VPVSGQKRVD (255 aa)) is the uDENN domain. Residues 106–121 (KEKVEGGAGPRGKEGA) show a composition bias toward basic and acidic residues. A disordered region spans residues 106 to 166 (KEKVEGGAGP…WGKRRAKAGS (61 aa)). The span at 123 to 140 (TSGASEEAATGSSESGST) shows a compositional bias: low complexity. Positions 141-156 (LQPPSADSTPDINQSP) are enriched in polar residues. Residue Ser155 is modified to Phosphoserine. The cDENN domain maps to 288 to 428 (RFTLVDFPLH…ESLELKKHLK (141 aa)). Residues 430–564 (ALASMSLNTQ…LNPSNYAFQR (135 aa)) enclose the dDENN domain. Disordered stretches follow at residues 604–635 (LSVP…SSYS) and 676–840 (QPQK…NSTE). The span at 614–629 (SDPTEDSGSDSQDYDD) shows a compositional bias: acidic residues. Phosphoserine occurs at positions 688 and 691. Residues 688–698 (SENSQENPPLR) show a composition bias toward polar residues. Residues 699–715 (SSSSTTASSSPSTVVHS) show a composition bias toward low complexity. Over residues 793–803 (PRFSQHVSGSR) the composition is skewed to polar residues. A phosphoserine mark is found at Ser812, Ser817, and Ser819. A compositionally biased stretch (low complexity) spans 826-839 (RASSPNSTVSNNST). Phosphoserine occurs at positions 857, 861, 915, 920, 929, and 1058. 3 disordered regions span residues 912 to 940 (QKSS…SSEN), 1050 to 1109 (KEPD…DTRS), and 1127 to 1272 (EVKK…RSSE). The span at 928–938 (SSPQGRSSNSS) shows a compositional bias: low complexity. A phosphothreonine mark is found at Thr1060 and Thr1065. Position 1109 is a phosphoserine (Ser1109). Positions 1127–1141 (EVKKQKALEKQRPEG) are enriched in basic and acidic residues. Polar residues predominate over residues 1157–1172 (QMSADSGVSLTSASQR). The segment covering 1189-1203 (SSSQDSEVSTVSNSS) has biased composition (low complexity). The segment covering 1232–1248 (SRATLSDSEIETNSATS) has biased composition (polar residues). Residue Thr1235 is modified to Phosphothreonine. Ser1237 and Ser1266 each carry phosphoserine. The Death domain maps to 1336–1411 (GMDQGPQEMI…GLVYSQQVNE (76 aa)).

The protein belongs to the MADD family. As to quaternary structure, interacts (via death domain) with TNFRSF1A (via death domain). Interacts with PIDD1. Interacts with YWHAZ. Interacts (via death domain) with KIF1B; links the motor KIF1B to Rab3-carrying vesicles in anterograde synaptic vesicle transport. Interacts with KIF1A. Interacts (via uDENN domain) with RAB3A, RAB3B, RAB3C and RAB3D; the GTP-bound form of the Rab proteins is preferred for interaction. Expressed in the brain.

The protein localises to the cell membrane. It localises to the cytoplasm. The protein resides in the cell projection. It is found in the axon. Its function is as follows. Guanyl-nucleotide exchange factor that regulates small GTPases of the Rab family. Converts GDP-bound inactive form of RAB27A and RAB27B to the GTP-bound active forms. Converts GDP-bound inactive form of RAB3A, RAB3C and RAB3D to the GTP-bound active forms, GTPases involved in synaptic vesicle exocytosis and vesicle secretion. Plays a role in synaptic vesicle formation and in vesicle trafficking at the neuromuscular junction. Involved in up-regulating a post-docking step of synaptic exocytosis in central synapses. Probably by binding to the motor proteins KIF1B and KIF1A, mediates motor-dependent transport of GTP-RAB3A-positive vesicles to the presynaptic nerve terminals. Plays a role in TNFA-mediated activation of the MAPK pathway, including ERK1/2. May link TNFRSF1A with MAP kinase activation. May be involved in the regulation of TNFA-induced apoptosis. The polypeptide is MAP kinase-activating death domain protein (Mus musculus (Mouse)).